The primary structure comprises 447 residues: Serine/threonine-protein phosphatase 2A 55 kDa regulatory subunit B delta isoform (447 aa).

WD repeat units lie at residues 26 to 65 (AEAD…KSRP), 91 to 132 (EIEE…KRVE), 175 to 213 (AHTY…RSFN), 224 to 264 (ELTE…LCDR), 283 to 321 (EIIS…RPVE), 338 to 379 (ENDC…DITL), and 414 to 447 (DFNK…DKVN).

It belongs to the phosphatase 2A regulatory subunit B family. In terms of assembly, PP2A consists of a common heterodimeric core enzyme, composed of a 36 kDa catalytic subunit (subunit C) and a 65 kDa constant regulatory subunit (PR65 or subunit A), that associates with a variety of regulatory subunits. Proteins that associate with the core dimer include three families of regulatory subunits B (the R2/B/PR55/B55, R3/B''/PR72/PR130/PR59 and R5/B'/B56 families), the 48 kDa variable regulatory subunit, viral proteins, and cell signaling molecules. Interacts with ensa (when phosphorylated at 'Ser-67') and arpp19 (when phosphorylated at 'Ser-67'), leading to inhibit PP2A activity.

It is found in the cytoplasm. Functionally, substrate-recognition subunit of protein phosphatase 2A (PP2A) that plays a key role in cell cycle by controlling mitosis entry and exit. The activity of PP2A complexes containing ppp2r2d (PR55-delta) fluctuate during the cell cycle: the activity is high in interphase and low in mitosis. During mitosis, activity of PP2A is inhibited via interaction with phosphorylated ensa and arpp19 inhibitors. PP2A complexes containing ppp2r2d (PR55-delta) also regulate the activity of TGF-beta/Activin/Nodal signaling by restricting receptor activity. Within the PP2A complexes, the B regulatory subunits modulate substrate selectivity and catalytic activity, and may also direct the localization of the catalytic enzyme to a particular subcellular compartment. This is Serine/threonine-protein phosphatase 2A 55 kDa regulatory subunit B delta isoform (ppp2r2d) from Xenopus laevis (African clawed frog).